Consider the following 189-residue polypeptide: Adenine phosphoribosyltransferase (189 aa).

Belongs to the purine/pyrimidine phosphoribosyltransferase family. Homodimer.

The protein localises to the cytoplasm. It carries out the reaction AMP + diphosphate = 5-phospho-alpha-D-ribose 1-diphosphate + adenine. It participates in purine metabolism; AMP biosynthesis via salvage pathway; AMP from adenine: step 1/1. Its function is as follows. Catalyzes a salvage reaction resulting in the formation of AMP, that is energically less costly than de novo synthesis. The protein is Adenine phosphoribosyltransferase of Frankia alni (strain DSM 45986 / CECT 9034 / ACN14a).